The primary structure comprises 243 residues: Venom peptide isomerase heavy chain (243 aa).

Positions 1–243 (IVGGKTAKFG…YTNWMSKNMV (243 aa)) constitute a Peptidase S1 domain. The cysteines at positions 31 and 47 are disulfide-linked. Active-site charge relay system residues include histidine 46 and aspartate 96. Asparagine 127 carries an N-linked (GlcNAc...) asparagine glycan. Intrachain disulfides connect cysteine 159/cysteine 181 and cysteine 190/cysteine 219. Serine 194 serves as the catalytic Charge relay system.

This sequence belongs to the peptidase S1 family. In terms of assembly, heterodimer with venom peptide isomerase light chain; disulfide-linked. In terms of processing, N-linked glycan at Asn-127 consists of Man3-GlcNAc2-Fuc. Expressed by the venom gland.

The protein resides in the secreted. Peptide isomerase that inverts the chirality at the Ser-81 of omega-Aga IVB. Acts cofactor-independently. This chain is Venom peptide isomerase heavy chain, found in Agelenopsis aperta (North American funnel-web spider).